The following is a 261-amino-acid chain: Imidazole glycerol phosphate synthase subunit HisF (261 aa).

Residues aspartate 11 and aspartate 130 contribute to the active site.

The protein belongs to the HisA/HisF family. As to quaternary structure, heterodimer of HisH and HisF.

It is found in the cytoplasm. The catalysed reaction is 5-[(5-phospho-1-deoxy-D-ribulos-1-ylimino)methylamino]-1-(5-phospho-beta-D-ribosyl)imidazole-4-carboxamide + L-glutamine = D-erythro-1-(imidazol-4-yl)glycerol 3-phosphate + 5-amino-1-(5-phospho-beta-D-ribosyl)imidazole-4-carboxamide + L-glutamate + H(+). Its pathway is amino-acid biosynthesis; L-histidine biosynthesis; L-histidine from 5-phospho-alpha-D-ribose 1-diphosphate: step 5/9. In terms of biological role, IGPS catalyzes the conversion of PRFAR and glutamine to IGP, AICAR and glutamate. The HisF subunit catalyzes the cyclization activity that produces IGP and AICAR from PRFAR using the ammonia provided by the HisH subunit. This is Imidazole glycerol phosphate synthase subunit HisF from Heliobacterium modesticaldum (strain ATCC 51547 / Ice1).